A 405-amino-acid chain; its full sequence is Imidazolonepropionase (405 aa).

Fe(3+) is bound by residues His-70 and His-72. Positions 70 and 72 each coordinate Zn(2+). The 4-imidazolone-5-propanoate site is built by Arg-79, Tyr-142, and His-175. Tyr-142 contributes to the N-formimidoyl-L-glutamate binding site. His-240 lines the Fe(3+) pocket. His-240 lines the Zn(2+) pocket. 4-imidazolone-5-propanoate is bound at residue Gln-243. Asp-315 serves as a coordination point for Fe(3+). Asp-315 serves as a coordination point for Zn(2+). Positions 317 and 319 each coordinate N-formimidoyl-L-glutamate. A 4-imidazolone-5-propanoate-binding site is contributed by Ser-320.

The protein belongs to the metallo-dependent hydrolases superfamily. HutI family. Requires Zn(2+) as cofactor. Fe(3+) serves as cofactor.

It is found in the cytoplasm. It catalyses the reaction 4-imidazolone-5-propanoate + H2O = N-formimidoyl-L-glutamate. Its pathway is amino-acid degradation; L-histidine degradation into L-glutamate; N-formimidoyl-L-glutamate from L-histidine: step 3/3. Functionally, catalyzes the hydrolytic cleavage of the carbon-nitrogen bond in imidazolone-5-propanoate to yield N-formimidoyl-L-glutamate. It is the third step in the universal histidine degradation pathway. The chain is Imidazolonepropionase from Ruegeria sp. (strain TM1040) (Silicibacter sp.).